Here is a 484-residue protein sequence, read N- to C-terminus: Sperm motility kinase Tcr mutant form (484 aa).

The region spanning 8 to 256 (YEMLETIGQG…VAEVMVHPWV (249 aa)) is the Protein kinase domain. Residues 14 to 22 (IGQGGCAQV) and lysine 37 contribute to the ATP site. The active-site Proton acceptor is the aspartate 127. Disordered stretches follow at residues 355–400 (EPTG…TMDQ) and 426–446 (STEG…RGWP). Polar residues predominate over residues 391-400 (PINTTPTMDQ).

Belongs to the protein kinase superfamily. Tyr protein kinase family. Smok subfamily. Testis-specific. Expressed in the testis from 22 days postpartum (22 dpp). Expressed late in spermiogenesis, only in Tcr-containing t-haplotypes.

The catalysed reaction is L-seryl-[protein] + ATP = O-phospho-L-seryl-[protein] + ADP + H(+). The enzyme catalyses L-threonyl-[protein] + ATP = O-phospho-L-threonyl-[protein] + ADP + H(+). While the main function of Smoks is to control sperm motility, the role of Smok-Tcr, with reduced kinase activity, is to counterbalance a signaling impairment caused by the distorter/sterility loci, giving t-sperm an advantage in reaching the oocytes. Transmission ratio distortion also called segregation distortion is the name given to the phenomenon above-mentioned. Being associated with the T-complex, it allows males heterozygous for a complete t-haplotype to preferentially transmit the t-haplotype chromosome. In Mus musculus (Mouse), this protein is Sperm motility kinase Tcr mutant form (Smoktcr).